A 458-amino-acid chain; its full sequence is Ammonium transporter Rh type B (458 aa).

Residues 1 to 13 lie on the Cytoplasmic side of the membrane; that stretch reads MAKSPRRVAGRRL. A helical membrane pass occupies residues 14 to 34; the sequence is LLPLLCLFFQGATAILFAIFV. Topologically, residues 35-61 are extracellular; sequence RYDQQTDAALWHGGNHSNADNEFYFRY. The N-linked (GlcNAc...) asparagine glycan is linked to Asn49. Residues 62 to 82 traverse the membrane as a helical segment; the sequence is PSFQDVHAMVFVGFGFLMVFL. At 83 to 86 the chain is on the cytoplasmic side; it reads QRYG. A helical transmembrane segment spans residues 87 to 107; it reads YSSLGFTFLLGAFALQWATLV. Residues 108 to 124 lie on the Extracellular side of the membrane; that stretch reads QGFLHSFHGGHIHVGME. The chain crosses the membrane as a helical span at residues 125 to 145; the sequence is SLINADFCAGAVLISFGAVLG. Residues 146–149 are Cytoplasmic-facing; sequence KTGP. A helical transmembrane segment spans residues 150–170; that stretch reads AQLLLMALLEVALFGLNEFVL. Residues 171–178 lie on the Extracellular side of the membrane; it reads LCLLGVRD. A helical transmembrane segment spans residues 179–201; that stretch reads AGGSMTIHTFGAYFGLVLSRVLY. The Cytoplasmic segment spans residues 202-219; sequence RPHLEKSQHRQGSVYHSD. The chain crosses the membrane as a helical span at residues 220 to 240; sequence LFAMIGTIFLWIFWPSFNSAL. The Extracellular portion of the chain corresponds to 241–251; it reads TSRGDGQPRTA. A helical membrane pass occupies residues 252 to 272; that stretch reads LNTYYSLTASTLSTFALSALV. Residues 273–282 are Cytoplasmic-facing; the sequence is GKDGRLDMVH. The helical transmembrane segment at 283–303 threads the bilayer; that stretch reads VQNAALAGGVVVGTASEMMLT. Residue Pro304 is a topological domain, extracellular. A helical membrane pass occupies residues 305-325; that stretch reads FGALAAGCLAGAISTLGYKFF. The Cytoplasmic segment spans residues 326–346; the sequence is TPILESKLKIQDTCGVHNLHG. The helical transmembrane segment at 347–367 threads the bilayer; that stretch reads MPGVLGALLGALMTGLTTHEA. Residues 368–393 are Extracellular-facing; that stretch reads YGDGLQSVFPLIAEGQRSATSQAIYQ. Residues 394 to 414 traverse the membrane as a helical segment; it reads LFGLSVTLLFASAGGVLGGLL. At 415–458 the chain is on the cytoplasmic side; it reads LKLPFLDAPPDSQCYEDQMCWEVPGEHGYEAQEALRVEEPDTEA. Positions 416-424 are interaction with ANK3; it reads KLPFLDAPP. Positions 429–432 match the Basolateral sorting signal motif; it reads YEDQ.

This sequence belongs to the ammonium transporter (TC 2.A.49) family. Rh subfamily. As to quaternary structure, interacts (via C-terminus) with ANK2 and ANK3; required for targeting to the basolateral membrane. Post-translationally, N-glycosylated.

It is found in the cell membrane. It localises to the basolateral cell membrane. The catalysed reaction is NH4(+)(in) = NH4(+)(out). It carries out the reaction methylamine(out) = methylamine(in). It catalyses the reaction CO2(out) = CO2(in). Ammonium transporter involved in the maintenance of acid-base homeostasis. Transports ammonium and its related derivative methylammonium across the basolateral plasma membrane of epithelial cells likely contributing to renal transepithelial ammonia transport and ammonia metabolism. May transport either NH4(+) or NH3 ammonia species predominantly mediating an electrogenic NH4(+) transport. May act as a CO2 channel providing for renal acid secretion. The sequence is that of Ammonium transporter Rh type B (RHBG) from Oryctolagus cuniculus (Rabbit).